The chain runs to 352 residues: DNA integrity scanning protein DisA (352 aa).

Positions 3-143 constitute a DAC domain; that stretch reads PQELIEKIKL…NYKYVVNQVD (141 aa). ATP is bound by residues G71, L89, and 102–106; that span reads TRHRT.

The protein belongs to the DisA family. As to quaternary structure, homooctamer. Requires Mg(2+) as cofactor.

It catalyses the reaction 2 ATP = 3',3'-c-di-AMP + 2 diphosphate. In terms of biological role, participates in a DNA-damage check-point. DisA forms globular foci that rapidly scan along the chromosomes searching for lesions. Also has diadenylate cyclase activity, catalyzing the condensation of 2 ATP molecules into cyclic di-AMP (c-di-AMP). c-di-AMP likely acts as a signaling molecule that may couple DNA integrity with a cellular process. In Thermotoga neapolitana (strain ATCC 49049 / DSM 4359 / NBRC 107923 / NS-E), this protein is DNA integrity scanning protein DisA.